Reading from the N-terminus, the 184-residue chain is ATP synthase subunit b, chloroplastic (184 aa).

A helical transmembrane segment spans residues 27-49; it reads LATNLINLSVVLGVLIFFGKGVL.

This sequence belongs to the ATPase B chain family. F-type ATPases have 2 components, F(1) - the catalytic core - and F(0) - the membrane proton channel. F(1) has five subunits: alpha(3), beta(3), gamma(1), delta(1), epsilon(1). F(0) has four main subunits: a(1), b(1), b'(1) and c(10-14). The alpha and beta chains form an alternating ring which encloses part of the gamma chain. F(1) is attached to F(0) by a central stalk formed by the gamma and epsilon chains, while a peripheral stalk is formed by the delta, b and b' chains.

It is found in the plastid. The protein resides in the chloroplast thylakoid membrane. Functionally, f(1)F(0) ATP synthase produces ATP from ADP in the presence of a proton or sodium gradient. F-type ATPases consist of two structural domains, F(1) containing the extramembraneous catalytic core and F(0) containing the membrane proton channel, linked together by a central stalk and a peripheral stalk. During catalysis, ATP synthesis in the catalytic domain of F(1) is coupled via a rotary mechanism of the central stalk subunits to proton translocation. Component of the F(0) channel, it forms part of the peripheral stalk, linking F(1) to F(0). The sequence is that of ATP synthase subunit b, chloroplastic from Lactuca sativa (Garden lettuce).